The sequence spans 922 residues: NEDD4-like E3 ubiquitin-protein ligase WWP1 (922 aa).

The C2 domain occupies 1 to 116 (MATASPRSDT…IHNRKLERVK (116 aa)). Composition is skewed to polar residues over residues 210–219 (GDNTPSSPSQ), 243–278 (NGESSSFAPTDNASVTGTPVVSEENALSPNCTSTTV), 286–302 (ILTSSENNECIPSTSAE), 314–323 (DTSNSRSSSA), and 340–351 (RQQSGNANTETL). The interval 210 to 388 (GDNTPSSPSQ…RPQPLPPGWE (179 aa)) is disordered. WW domains follow at residues 349 to 382 (ETLPSGWEQRKDPHGRTYYVDHNTRTTTWERPQP), 381 to 414 (QPLPPGWERRVDDRRRVYYVDHNTRTTTWQRPTM), 456 to 489 (GPLPPGWEKRVDSTDRVYFVNHNTKTTQWEDPRT), and 496 to 529 (EPLPEGWEIRYTREGVRYFVDHNTRTTTFKDPRN). The required for interaction with and ubiquitination of AMOTL2. Required for interaction with YAP1 stretch occupies residues 349–531 (ETLPSGWEQR…TTFKDPRNGK (183 aa)). Positions 588–922 (KPYDLRRRLY…IEETEGFGQE (335 aa)) constitute an HECT domain. C890 (glycyl thioester intermediate) is an active-site residue.

In terms of assembly, interacts with the Crumbs complex components PALS1 and PATJ; interaction with the Crumbs complex is enhanced by WWP1's interaction with AMOTL2 and facilitates WWP1 localization to the plasma membrane. Interaction with the Crumbs complex promotes WWP1 monoubiquitination of AMOTL2, which activates the Hippo signaling pathway. Binds KLF2 and HIVEP3. Binds SCNN1A, SCNN1B, SCNN1G, WBP1, WBP2, DRPLA and adenovirus type 2 PIII. Interacts with RNF11. Interacts with SPART. Interacts with ERBB4 isoforms JM-B CYT-1 and JM-A CYT-1. Interacts with SMAD1, SMAD2, SMAD3, SMAD5, SMAD6, SMAD7, TGFBR1 and TGFBR2. Associates with the TGFBR1:TGFBR2 receptor complex in presence of SMAD7. Interacts with SKIL isoform 1. Interacts with TP63 isoform 1 and isoform 2. Interacts with STAMBP and RNF11. Interacts with NDFIP1 and NDFIP2; this interaction activates the E3 ubiquitin-protein ligase. Interacts with TGIF. Interacts (via WW domains) with ARRDC1, ARRDC2 and ARRDC3. (Microbial infection) Interacts with HTLV-1 protein Gag. As to quaternary structure, (Microbial infection) Interacts with ebola virus protein VP40. Auto-ubiquitinated and ubiquitinated by RNF11. As to expression, detected in heart, placenta, pancreas, kidney, liver, skeletal muscle, bone marrow, fetal brain, and at much lower levels in adult brain and lung. Isoform 1 and isoform 5 predominate in all tissues tested, except in testis and bone marrow, where isoform 5 is expressed at much higher levels than isoform 1.

It is found in the cytoplasm. The protein localises to the cell membrane. It localises to the nucleus. Its subcellular location is the cell junction. The catalysed reaction is S-ubiquitinyl-[E2 ubiquitin-conjugating enzyme]-L-cysteine + [acceptor protein]-L-lysine = [E2 ubiquitin-conjugating enzyme]-L-cysteine + N(6)-ubiquitinyl-[acceptor protein]-L-lysine.. It functions in the pathway protein modification; protein ubiquitination. Its activity is regulated as follows. Activated by NDFIP1- and NDFIP2-binding. Its function is as follows. E3 ubiquitin-protein ligase which accepts ubiquitin from an E2 ubiquitin-conjugating enzyme in the form of a thioester and then directly transfers the ubiquitin to targeted substrates. Ubiquitinates ERBB4 isoforms JM-A CYT-1 and JM-B CYT-1, KLF2, KLF5 and TP63 and promotes their proteasomal degradation. Ubiquitinates RNF11 without targeting it for degradation. Ubiquitinates and promotes degradation of TGFBR1; the ubiquitination is enhanced by SMAD7. Ubiquitinates SMAD6 and SMAD7. Ubiquitinates and promotes degradation of SMAD2 in response to TGF-beta signaling, which requires interaction with TGIF. Activates the Hippo signaling pathway in response to cell contact inhibition and recruitment to the Crumbs complex at the cell membrane. Monoubiquitinates AMOTL2 which facilitates its interaction with and activation of LATS2. LATS2 then phosphorylates YAP1, excluding it from the nucleus and therefore ultimately represses YAP1-driven transcription of target genes. In Homo sapiens (Human), this protein is NEDD4-like E3 ubiquitin-protein ligase WWP1 (WWP1).